Reading from the N-terminus, the 625-residue chain is Very-long-chain aldehyde decarbonylase CER1 (625 aa).

5 helical membrane passes run 45–65 (LGYF…QVWI), 126–146 (GVLM…YWLH), 177–197 (PFAE…TTLL), 200–220 (TASI…NNMG), and 329–349 (LLWP…RLFV). The region spanning 138-272 (VEFLYYWLHK…MPLYDYIYGT (135 aa)) is the Fatty acid hydroxylase domain.

The protein belongs to the sterol desaturase family. As to quaternary structure, homodimer. Interacts with CER3, CYTB5-B, CYTB5-C, CYTB5-D and CYTB5-E. Expressed in seedlings, stems, leaves, flowers, fruits and siliques. Not detected in roots, pollen and seeds. Expressed in trichomes, cotyledons, shoot apical meristem and leaf primordia. Preferentially associated with young leaves rather than mature leaves. Expressed in the epidermis of the stem and caulines leaves, in the carpels and the sepals.

Its subcellular location is the endoplasmic reticulum membrane. It carries out the reaction a long-chain fatty aldehyde + 2 NADPH + O2 + H(+) = a long-chain alkane + formate + 2 NADP(+) + H2O. Aldehyde decarbonylase involved in the conversion of aldehydes to alkanes. Core component of a very-long-chain alkane synthesis complex. Involved in epicuticular wax biosynthesis and pollen fertility. The sequence is that of Very-long-chain aldehyde decarbonylase CER1 (CER1) from Arabidopsis thaliana (Mouse-ear cress).